Consider the following 124-residue polypeptide: Fluoride-specific ion channel FluC (124 aa).

4 helical membrane-spanning segments follow: residues 1-21, 38-58, 69-89, and 97-117; these read MIPL…LRFA, TLAV…LFLV, GLIV…LDTV, and VALA…ATWA. Residues Gly-76 and Thr-79 each coordinate Na(+).

This sequence belongs to the fluoride channel Fluc/FEX (TC 1.A.43) family.

The protein localises to the cell inner membrane. It carries out the reaction fluoride(in) = fluoride(out). Its activity is regulated as follows. Na(+) is not transported, but it plays an essential structural role and its presence is essential for fluoride channel function. Functionally, fluoride-specific ion channel. Important for reducing fluoride concentration in the cell, thus reducing its toxicity. In Pseudomonas fluorescens (strain ATCC BAA-477 / NRRL B-23932 / Pf-5), this protein is Fluoride-specific ion channel FluC.